Reading from the N-terminus, the 463-residue chain is uncharacterized protein (463 aa).

In terms of domain architecture, PE spans 1-93 (MSYMIAVPDM…AGAYASAEAT (93 aa)). 2 disordered regions span residues 231-320 (GGAG…AGNG) and 408-463 (NGGD…TPGQ). The span at 408–451 (NGGDGGKGGDAQLIGNGGNGGNGGKGGTGLMPGINGTGGAGGSR) shows a compositional bias: gly residues.

This sequence belongs to the mycobacterial PE family. PGRS subfamily.

This is an uncharacterized protein from Mycobacterium tuberculosis (strain ATCC 25618 / H37Rv).